The chain runs to 1049 residues: Exotoxin PaxA (1049 aa).

Helical transmembrane passes span 246 to 266, 311 to 331, 375 to 395, and 397 to 417; these read GLGLDIISSLLSGVTASFTLA, GPAAALIASSISLAISPLSFL, ITTISTALSAIAAGTAAASAG, and LVGAPITLLVTGITGLISGIL. Hemolysin-type calcium-binding repeat units lie at residues 744 to 761, 762 to 779, 780 to 797, 798 to 815, 826 to 843, and 844 to 861; these read KGSKFRDIFHGADGDDLL, NGNDGDDILYGDKGNDEL, RGDNGNDQLYGGEGNDKL, FGGNGNNYLSGGDGDDEL, RGGKGNDKLYGGAGSDFL, and DGGEGDDYLAGGEGNDFY.

Belongs to the RTX prokaryotic toxin (TC 1.C.11) family.

The protein resides in the secreted. Its subcellular location is the host cell membrane. Its function is as follows. PaxA is associated with abortion cases in swine and septicemia in young piglets. Shows cohemolytic activity with the sphingomyelinase of S.aureus but is devoid of direct hemolytic activity. In Pasteurella aerogenes, this protein is Exotoxin PaxA (paxA).